The sequence spans 260 residues: Potassium inward rectifier (Kir)-like channel 3 (260 aa).

The disordered stretch occupies residues 1–34 (MPMTPSEFKNRLLFGSLPRSSSDPTDLQFTEPNV). Residues 1 to 68 (MPMTPSEFKN…EQSVSKSIAR (68 aa)) lie on the Cytoplasmic side of the membrane. Positions 18–31 (PRSSSDPTDLQFTE) are enriched in polar residues. A helical membrane pass occupies residues 69 to 89 (QALALLVVYLSLGVLIYWLTL). An intramembrane region (pore-forming) is located at residues 127-146 (DSFCFSVMMVTTVGFGDRAF). Residues 153–173 (FLAAVWLLVSTLAVARAFLFL) traverse the membrane as a helical segment. Topologically, residues 174-260 (ADARADKRNR…LVDLTTATSV (87 aa)) are cytoplasmic. EF-hand domains are found at residues 190 to 225 (LGES…QMEK) and 229 to 256 (EDFI…DLTT). Residues aspartate 203, aspartate 205, aspartate 207, arginine 209, glutamate 214, aspartate 242, serine 246, arginine 248, and aspartate 253 each contribute to the Ca(2+) site.

It belongs to the two pore domain potassium channel (TC 1.A.1.7) family. As to quaternary structure, homotetramer. In terms of tissue distribution, expressed in hydathodes and the vascular tissues of roots, stems, leaves and flowers.

It localises to the vacuole membrane. In terms of biological role, probable calcium-activated potassium channel. The chain is Potassium inward rectifier (Kir)-like channel 3 (KCO3) from Arabidopsis thaliana (Mouse-ear cress).